The following is a 211-amino-acid chain: Thiamine-phosphate synthase (211 aa).

Residues 43-47 (QLRDK) and N75 each bind 4-amino-2-methyl-5-(diphosphooxymethyl)pyrimidine. The Mg(2+) site is built by D76 and D95. A 4-amino-2-methyl-5-(diphosphooxymethyl)pyrimidine-binding site is contributed by S114. 140-142 (TAS) contacts 2-[(2R,5Z)-2-carboxy-4-methylthiazol-5(2H)-ylidene]ethyl phosphate. K143 contacts 4-amino-2-methyl-5-(diphosphooxymethyl)pyrimidine. Residues G170 and 190 to 191 (IS) each bind 2-[(2R,5Z)-2-carboxy-4-methylthiazol-5(2H)-ylidene]ethyl phosphate.

Belongs to the thiamine-phosphate synthase family. The cofactor is Mg(2+).

The enzyme catalyses 2-[(2R,5Z)-2-carboxy-4-methylthiazol-5(2H)-ylidene]ethyl phosphate + 4-amino-2-methyl-5-(diphosphooxymethyl)pyrimidine + 2 H(+) = thiamine phosphate + CO2 + diphosphate. The catalysed reaction is 2-(2-carboxy-4-methylthiazol-5-yl)ethyl phosphate + 4-amino-2-methyl-5-(diphosphooxymethyl)pyrimidine + 2 H(+) = thiamine phosphate + CO2 + diphosphate. It carries out the reaction 4-methyl-5-(2-phosphooxyethyl)-thiazole + 4-amino-2-methyl-5-(diphosphooxymethyl)pyrimidine + H(+) = thiamine phosphate + diphosphate. Its pathway is cofactor biosynthesis; thiamine diphosphate biosynthesis; thiamine phosphate from 4-amino-2-methyl-5-diphosphomethylpyrimidine and 4-methyl-5-(2-phosphoethyl)-thiazole: step 1/1. Its function is as follows. Condenses 4-methyl-5-(beta-hydroxyethyl)thiazole monophosphate (THZ-P) and 2-methyl-4-amino-5-hydroxymethyl pyrimidine pyrophosphate (HMP-PP) to form thiamine monophosphate (TMP). The polypeptide is Thiamine-phosphate synthase (Coprothermobacter proteolyticus (strain ATCC 35245 / DSM 5265 / OCM 4 / BT)).